The following is a 601-amino-acid chain: Beta-phellandrene synthase (601 aa).

A chloroplast-targeting transit peptide spans 1 to 35 (MSTISIHHVGILRNPLPSKNKRALINNPWSLSLPR). Residues aspartate 356 and aspartate 360 each coordinate Mn(2+). Positions 356–360 (DDVYD) match the DDXXD motif motif. Homodimerization regions lie at residues 362-368 (YGTLDEL) and 434-471 (EAKWYESGYTPSLEEYLNNAGFSIGVIPIVVALELSIP). Mn(2+)-binding residues include aspartate 499 and glutamate 507.

Belongs to the terpene synthase family. Homodimer. Mn(2+) serves as cofactor. Mg(2+) is required as a cofactor. In terms of tissue distribution, expressed in peltate glandular trichomes. Present at low levels in flowers, leaves and stems.

It is found in the plastid. Its subcellular location is the chloroplast. The catalysed reaction is (2E)-geranyl diphosphate = beta-phellandrene + diphosphate. It carries out the reaction (2E)-geranyl diphosphate = (1R,5R)-sabinene + diphosphate. The protein operates within secondary metabolite biosynthesis; terpenoid biosynthesis. Functionally, involved in the biosynthesis of phenolic monoterpenes natural products. Monoterpene synthase that catalyzes mainly the formation of olefins such as sabinene and beta-phellandrene, and minor amounts of other monoterpenes (e.g. myrcene, gamma-terpinene, alpha-thujene and alpha-pinene) from geranyl diphosphate (GPP). This chain is Beta-phellandrene synthase, found in Origanum vulgare (Wild marjoram).